A 262-amino-acid chain; its full sequence is Tryptophan synthase alpha chain (262 aa).

Catalysis depends on proton acceptor residues Glu48 and Asp59.

Belongs to the TrpA family. As to quaternary structure, tetramer of two alpha and two beta chains.

The catalysed reaction is (1S,2R)-1-C-(indol-3-yl)glycerol 3-phosphate + L-serine = D-glyceraldehyde 3-phosphate + L-tryptophan + H2O. Its pathway is amino-acid biosynthesis; L-tryptophan biosynthesis; L-tryptophan from chorismate: step 5/5. In terms of biological role, the alpha subunit is responsible for the aldol cleavage of indoleglycerol phosphate to indole and glyceraldehyde 3-phosphate. The sequence is that of Tryptophan synthase alpha chain from Helicobacter pylori (strain J99 / ATCC 700824) (Campylobacter pylori J99).